A 202-amino-acid chain; its full sequence is Ribosomal RNA small subunit methyltransferase G (202 aa).

S-adenosyl-L-methionine is bound by residues Gly75, Phe80, 125-126 (VQ), and Arg139.

This sequence belongs to the methyltransferase superfamily. RNA methyltransferase RsmG family.

The protein localises to the cytoplasm. In terms of biological role, specifically methylates the N7 position of a guanine in 16S rRNA. This is Ribosomal RNA small subunit methyltransferase G from Mesomycoplasma hyopneumoniae (strain J / ATCC 25934 / NCTC 10110) (Mycoplasma hyopneumoniae).